The sequence spans 159 residues: Peptide deformylase (159 aa).

2 residues coordinate Fe cation: cysteine 88 and histidine 130. The active site involves glutamate 131. Histidine 134 provides a ligand contact to Fe cation.

It belongs to the polypeptide deformylase family. It depends on Fe(2+) as a cofactor.

It catalyses the reaction N-terminal N-formyl-L-methionyl-[peptide] + H2O = N-terminal L-methionyl-[peptide] + formate. In terms of biological role, removes the formyl group from the N-terminal Met of newly synthesized proteins. Requires at least a dipeptide for an efficient rate of reaction. N-terminal L-methionine is a prerequisite for activity but the enzyme has broad specificity at other positions. The sequence is that of Peptide deformylase from Caldanaerobacter subterraneus subsp. tengcongensis (strain DSM 15242 / JCM 11007 / NBRC 100824 / MB4) (Thermoanaerobacter tengcongensis).